A 214-amino-acid polypeptide reads, in one-letter code: ATP phosphoribosyltransferase (214 aa).

This sequence belongs to the ATP phosphoribosyltransferase family. Short subfamily. Heteromultimer composed of HisG and HisZ subunits.

It is found in the cytoplasm. The enzyme catalyses 1-(5-phospho-beta-D-ribosyl)-ATP + diphosphate = 5-phospho-alpha-D-ribose 1-diphosphate + ATP. The protein operates within amino-acid biosynthesis; L-histidine biosynthesis; L-histidine from 5-phospho-alpha-D-ribose 1-diphosphate: step 1/9. Catalyzes the condensation of ATP and 5-phosphoribose 1-diphosphate to form N'-(5'-phosphoribosyl)-ATP (PR-ATP). Has a crucial role in the pathway because the rate of histidine biosynthesis seems to be controlled primarily by regulation of HisG enzymatic activity. This is ATP phosphoribosyltransferase from Marinomonas sp. (strain MWYL1).